We begin with the raw amino-acid sequence, 504 residues long: MSIKSEEISALIKQQLESYQTELSVAETGTVTYVGDGIARAHGLDNALQGELLEFSNGVYGMVQNLESNDVGIVVLGDFDGIREGDTVKRTGRIMEVPVGDAMIGRVVNPLGQPVDGLGEIKTTNTRPIEHKAPGIMQRQSVSEPLQTGIKAIDALVPIGRGQRELIIGDRKTGKTSVAIDAILNQKDQDMICVYVAIGQKDSTVRAQVETLKKLGAMDYTIVVTAGPAEPAPLLYLAPYAGAAMGEEFMMNGKHVLIVYDDLSKQATAYRELSLILRRPPGREAYPGDVFYLHSRLLERAAKLSDELGGGSMTALPIIETQAGDISAYIPTNVISITDGQIFLDSDSFYSGVRPAIDAGASVSRVGGDAQIKAMKSVAGTLRLDLASYRELESFSQFGSDLDAATQAKLNRGQRIVEVLKQPVHSPLKVEEQVMILYALTNGYLDKVAVDDIARYQSELFEFIHASHQDLFDTILATKKLPEADKMNGALDAFAEQFQPTAAK.

169-176 serves as a coordination point for ATP; the sequence is GDRKTGKT.

The protein belongs to the ATPase alpha/beta chains family. As to quaternary structure, F-type ATPases have 2 components, CF(1) - the catalytic core - and CF(0) - the membrane proton channel. CF(1) has five subunits: alpha(3), beta(3), gamma(1), delta(1), epsilon(1). CF(0) has three main subunits: a(1), b(2) and c(9-12). The alpha and beta chains form an alternating ring which encloses part of the gamma chain. CF(1) is attached to CF(0) by a central stalk formed by the gamma and epsilon chains, while a peripheral stalk is formed by the delta and b chains.

The protein resides in the cell membrane. The enzyme catalyses ATP + H2O + 4 H(+)(in) = ADP + phosphate + 5 H(+)(out). In terms of biological role, produces ATP from ADP in the presence of a proton gradient across the membrane. The alpha chain is a regulatory subunit. This Lactiplantibacillus plantarum (strain ATCC BAA-793 / NCIMB 8826 / WCFS1) (Lactobacillus plantarum) protein is ATP synthase subunit alpha.